A 232-amino-acid chain; its full sequence is Lipoprotein-releasing system ATP-binding protein LolD (232 aa).

One can recognise an ABC transporter domain in the interval 11–231 (VYLHDIRRQY…SLENGHVVEL (221 aa)). Position 47–54 (47–54 (APSGSGKS)) interacts with ATP.

This sequence belongs to the ABC transporter superfamily. Lipoprotein translocase (TC 3.A.1.125) family. In terms of assembly, the complex is composed of two ATP-binding proteins (LolD) and two transmembrane proteins (LolC and LolE).

Its subcellular location is the cell inner membrane. Its function is as follows. Part of the ABC transporter complex LolCDE involved in the translocation of mature outer membrane-directed lipoproteins, from the inner membrane to the periplasmic chaperone, LolA. Responsible for the formation of the LolA-lipoprotein complex in an ATP-dependent manner. The sequence is that of Lipoprotein-releasing system ATP-binding protein LolD from Nitrobacter hamburgensis (strain DSM 10229 / NCIMB 13809 / X14).